Reading from the N-terminus, the 424-residue chain is 3-ketoacyl-CoA thiolase, peroxisomal (424 aa).

The N-terminal 26 residues, methionine 1–cysteine 26, are a transit peptide targeting the peroxisome. Residues methionine 1–cysteine 26 are PTS2-type peroxisomal targeting signal. Phosphothreonine occurs at positions 59 and 60. Residue cysteine 123 is the Acyl-thioester intermediate of the active site. Active-site proton acceptor residues include histidine 377 and cysteine 408.

Belongs to the thiolase-like superfamily. Thiolase family. In terms of assembly, homodimer. Interacts (via PTS2-type peroxisomal targeting signal region) with PEX7; leading to its translocation into peroxisomes.

The protein localises to the peroxisome. The catalysed reaction is an acyl-CoA + acetyl-CoA = a 3-oxoacyl-CoA + CoA. It catalyses the reaction 2 acetyl-CoA = acetoacetyl-CoA + CoA. The enzyme catalyses tetradecanoyl-CoA + acetyl-CoA = 3-oxohexadecanoyl-CoA + CoA. It carries out the reaction hexanoyl-CoA + acetyl-CoA = 3-oxooctanoyl-CoA + CoA. The catalysed reaction is 3-oxohexadecanedioyl-CoA + CoA = tetradecanedioyl-CoA + acetyl-CoA. It catalyses the reaction 3-oxo-(6Z,9Z,12Z,15Z,18Z,21Z)-tetracosahexaenoyl-CoA + CoA = (4Z,7Z,10Z,13Z,16Z,19Z)-docosahexaenoyl-CoA + acetyl-CoA. It functions in the pathway lipid metabolism; peroxisomal fatty acid beta-oxidation. Functionally, responsible for the thiolytic cleavage of straight chain 3-keto fatty acyl-CoAs (3-oxoacyl-CoAs). Plays an important role in fatty acid peroxisomal beta-oxidation. Catalyzes the cleavage of short, medium, long, and very long straight chain 3-oxoacyl-CoAs. This is 3-ketoacyl-CoA thiolase, peroxisomal from Homo sapiens (Human).